Here is a 299-residue protein sequence, read N- to C-terminus: Cysteine synthase B (299 aa).

N6-(pyridoxal phosphate)lysine is present on K40. Pyridoxal 5'-phosphate contacts are provided by residues N70, 174–178 (GTGGT), and S261.

This sequence belongs to the cysteine synthase/cystathionine beta-synthase family. Pyridoxal 5'-phosphate serves as cofactor.

It catalyses the reaction O-acetyl-L-serine + hydrogen sulfide = L-cysteine + acetate. It participates in amino-acid biosynthesis; L-cysteine biosynthesis; L-cysteine from L-serine: step 2/2. This chain is Cysteine synthase B (cysM), found in Campylobacter jejuni subsp. jejuni serotype O:2 (strain ATCC 700819 / NCTC 11168).